A 211-amino-acid polypeptide reads, in one-letter code: Thiamine-phosphate synthase (211 aa).

4-amino-2-methyl-5-(diphosphooxymethyl)pyrimidine is bound by residues 43-47 and Asn-75; that span reads QLRDK. Mg(2+) contacts are provided by Asp-76 and Asp-95. Residue Ser-114 participates in 4-amino-2-methyl-5-(diphosphooxymethyl)pyrimidine binding. A 2-[(2R,5Z)-2-carboxy-4-methylthiazol-5(2H)-ylidene]ethyl phosphate-binding site is contributed by 140–142; that stretch reads TAS. Lys-143 serves as a coordination point for 4-amino-2-methyl-5-(diphosphooxymethyl)pyrimidine. 2-[(2R,5Z)-2-carboxy-4-methylthiazol-5(2H)-ylidene]ethyl phosphate contacts are provided by residues Gly-170 and 190–191; that span reads IS.

It belongs to the thiamine-phosphate synthase family. The cofactor is Mg(2+).

It catalyses the reaction 2-[(2R,5Z)-2-carboxy-4-methylthiazol-5(2H)-ylidene]ethyl phosphate + 4-amino-2-methyl-5-(diphosphooxymethyl)pyrimidine + 2 H(+) = thiamine phosphate + CO2 + diphosphate. It carries out the reaction 2-(2-carboxy-4-methylthiazol-5-yl)ethyl phosphate + 4-amino-2-methyl-5-(diphosphooxymethyl)pyrimidine + 2 H(+) = thiamine phosphate + CO2 + diphosphate. The catalysed reaction is 4-methyl-5-(2-phosphooxyethyl)-thiazole + 4-amino-2-methyl-5-(diphosphooxymethyl)pyrimidine + H(+) = thiamine phosphate + diphosphate. It functions in the pathway cofactor biosynthesis; thiamine diphosphate biosynthesis; thiamine phosphate from 4-amino-2-methyl-5-diphosphomethylpyrimidine and 4-methyl-5-(2-phosphoethyl)-thiazole: step 1/1. Condenses 4-methyl-5-(beta-hydroxyethyl)thiazole monophosphate (THZ-P) and 2-methyl-4-amino-5-hydroxymethyl pyrimidine pyrophosphate (HMP-PP) to form thiamine monophosphate (TMP). This chain is Thiamine-phosphate synthase, found in Coprothermobacter proteolyticus (strain ATCC 35245 / DSM 5265 / OCM 4 / BT).